We begin with the raw amino-acid sequence, 272 residues long: Sordarin/hypoxysordarin biosynthesis cluster protein P (272 aa).

2 N-linked (GlcNAc...) asparagine glycosylation sites follow: Asn6 and Asn23. Transmembrane regions (helical) follow at residues 31-51 and 67-87; these read FLAS…LLFL and AYHM…VDLA. N-linked (GlcNAc...) asparagine glycosylation occurs at Asn208.

Its subcellular location is the membrane. The protein operates within antibiotic biosynthesis. Functionally, part of the gene cluster that mediates the biosynthesis of sordarin and hypoxysordarin, glycoside antibiotics with a unique tetracyclic diterpene aglycone structure. First, the geranylgeranyl diphosphate synthase sdnC constructs GGDP from farnesyl diphosphate and isopentenyl diphosphate. The diterpene cyclase sdnA then catalyzes the cyclization of GGDP to afford cycloaraneosene. Cycloaraneosene is then hydroxylated four times by the putative cytochrome P450 monooxygenases sdnB, sdnE, sdnF and sdnH to give a hydroxylated cycloaraneosene derivative such as cycloaraneosene-8,9,13,19-tetraol. Although the order of the hydroxylations is unclear, at least C8, C9 and C13 of the cycloaraneosene skeleton are hydroxylated before the sordaricin formation. Dehydration of the 13-hydroxy group of the hydroxylated cycloaraneosene derivative might be catalyzed by an unassigned hypothetical protein such as sdnG and sdnP to construct the cyclopentadiene moiety. The FAD-dependent oxidoreductase sdnN is proposed to catalyze the oxidation at C9 of the hydroxylated cycloaraneosene derivative and also catalyze the Baeyer-Villiger oxidation to give the lactone intermediate. The presumed lactone intermediate would be hydrolyzed to give an acrolein moiety and a carboxylate moiety. Then, [4+2]cycloaddition would occur between the acrolein moiety and the cyclopentadiene moiety to give sordaricin. SdnN might also be involved in the [4+2]cycloaddition after the hypothesized oxidation to accommodate the oxidized product and prompt the [4+2]cycloaddition. GDP-6-deoxy-D-altrose may be biosynthesized from GDP-D-mannose by the putative GDP-mannose-4,6-dehydratase sdnI and the short-chain dehydrogenase sdnK. The glycosyltransferase sdnJ catalyzes the attachment of 6-deoxy-D-altrose onto the 19-hydroxy group of sordaricin to give 4'-O-demethylsordarin. The methyltransferase sdnD would complete the biosynthesis of sordarin. Sordarin can be further modified into hypoxysordarin. The unique acyl chain at the 3'-hydroxy group of hypoxysordarin would be constructed by an iterative type I PKS sdnO and the trans-acting polyketide methyltransferase sdnL. SdnL would be responsible for the introduction of an alpha-methyl group of the polyketide chain. Alternatively, the beta-lactamase-like protein sdnR might be responsible for the cleavage and transfer of the polyketide chain from the PKS sdnO to sordarin. Two putative cytochrome P450 monooxygenases, sdnQ and sdnT, might catalyze the epoxidations of the polyketide chain to complete the biosynthesis of hypoxysordarin. Transcriptional regulators sdnM and sdnS are presumably encoded for the transcriptional regulation of the expression of the sdn gene cluster. This Sordaria araneosa (Pleurage araneosa) protein is Sordarin/hypoxysordarin biosynthesis cluster protein P.